The sequence spans 2311 residues: Proto-oncogene tyrosine-protein kinase ROS (2311 aa).

A signal peptide spans 1-24 (MRNACLLLNRLGAFYFIWISAAYC). Residues 25–1873 (SFSKNCQDLC…LAKDTVTSPD (1849 aa)) lie on the Extracellular side of the membrane. 34 N-linked (GlcNAc...) asparagine glycosylation sites follow: asparagine 49, asparagine 65, asparagine 77, asparagine 123, asparagine 132, asparagine 265, asparagine 287, asparagine 307, asparagine 333, asparagine 377, asparagine 405, asparagine 480, asparagine 607, asparagine 628, asparagine 706, asparagine 714, asparagine 911, asparagine 940, asparagine 962, asparagine 971, asparagine 1110, asparagine 1154, asparagine 1180, asparagine 1233, asparagine 1255, asparagine 1282, asparagine 1316, asparagine 1470, asparagine 1509, asparagine 1588, asparagine 1628, asparagine 1682, asparagine 1696, and asparagine 1730. 2 Fibronectin type-III domains span residues 110 to 202 (KPGA…ASGV) and 203 to 294 (PTTA…PESK). In terms of domain architecture, Fibronectin type-III 3 spans 571–671 (LPTLPRLVTV…EPFRGMTFEE (101 aa)). 2 consecutive Fibronectin type-III domains span residues 952-1047 (VPES…APEG) and 1051-1158 (APAN…SSDI). Fibronectin type-III domains follow at residues 1459 to 1569 (DTEK…TLYG), 1570 to 1669 (VPEG…AKTF), 1671 to 1766 (TPLS…TTAG), and 1767 to 1868 (VPSK…AKDT). Residues 1754-1764 (STSSPTSFKTT) show a composition bias toward low complexity. The interval 1754-1786 (STSSPTSFKTTAGVPSKPGTPKRAEDSKNSVQW) is disordered. Over residues 1775–1786 (KRAEDSKNSVQW) the composition is skewed to basic and acidic residues. 3 N-linked (GlcNAc...) asparagine glycosylation sites follow: asparagine 1792, asparagine 1795, and asparagine 1822. Residues 1874-1898 (ITAIVAVIGAVVLGLTIIILFGFVW) traverse the membrane as a helical segment. Over 1899–2311 (HQRWKSRKPA…SISSAELTSV (413 aa)) the chain is Cytoplasmic. A Protein kinase domain is found at 1961 to 2240 (LNLHKLLGSG…KLQEIRHSPL (280 aa)). Residues 1967–1975 (LGSGAFGEV) and lysine 1996 contribute to the ATP site. Aspartate 2095 serves as the catalytic Proton acceptor. Phosphotyrosine; by autocatalysis is present on tyrosine 2131.

This sequence belongs to the protein kinase superfamily. Tyr protein kinase family. Insulin receptor subfamily. Interacts with VAV3; constitutive interaction mediating VAV3 phosphorylation. As to expression, highest expression in kidney. Also expressed in gonad, thymus, bursa, brain and kidney.

The protein localises to the cell membrane. The enzyme catalyses L-tyrosyl-[protein] + ATP = O-phospho-L-tyrosyl-[protein] + ADP + H(+). Its function is as follows. Orphan receptor tyrosine kinase (RTK) that may activate several downstream signaling pathways related to cell differentiation, proliferation, growth and survival including the PI3 kinase-mTOR signaling pathway. Mediates the phosphorylation of PTPN11, an activator of this pathway. May also phosphorylate and activate the transcription factor STAT3 to control anchorage-independent cell growth. Mediates the phosphorylation and the activation of VAV3, a guanine nucleotide exchange factor regulating cell morphology. May activate other downstream signaling proteins including AKT1, MAPK1, MAPK3, IRS1, and PLCG2. The chain is Proto-oncogene tyrosine-protein kinase ROS (ROS1) from Gallus gallus (Chicken).